Consider the following 120-residue polypeptide: NAD(P)H-quinone oxidoreductase subunit 3, chloroplastic (120 aa).

The next 3 helical transmembrane spans lie at 7–27 (YDSF…AFSI), 63–83 (YMFA…YPWA), and 89–109 (LGLF…VGLV).

This sequence belongs to the complex I subunit 3 family. In terms of assembly, NDH is composed of at least 16 different subunits, 5 of which are encoded in the nucleus.

It localises to the plastid. It is found in the chloroplast thylakoid membrane. It catalyses the reaction a plastoquinone + NADH + (n+1) H(+)(in) = a plastoquinol + NAD(+) + n H(+)(out). It carries out the reaction a plastoquinone + NADPH + (n+1) H(+)(in) = a plastoquinol + NADP(+) + n H(+)(out). NDH shuttles electrons from NAD(P)H:plastoquinone, via FMN and iron-sulfur (Fe-S) centers, to quinones in the photosynthetic chain and possibly in a chloroplast respiratory chain. The immediate electron acceptor for the enzyme in this species is believed to be plastoquinone. Couples the redox reaction to proton translocation, and thus conserves the redox energy in a proton gradient. The polypeptide is NAD(P)H-quinone oxidoreductase subunit 3, chloroplastic (Adiantum capillus-veneris (Maidenhair fern)).